We begin with the raw amino-acid sequence, 864 residues long: Putative Gly-rich membrane protein Bcell_0380 (864 aa).

Residues isoleucine 7 to valine 27 form a helical membrane-spanning segment. The interval threonine 372–methionine 399 is disordered. The span at threonine 383–serine 395 shows a compositional bias: polar residues.

It is found in the cell membrane. This Evansella cellulosilytica (strain ATCC 21833 / DSM 2522 / FERM P-1141 / JCM 9156 / N-4) (Bacillus cellulosilyticus) protein is Putative Gly-rich membrane protein Bcell_0380.